A 362-amino-acid polypeptide reads, in one-letter code: Outer membrane porin protein OmpD (362 aa).

The signal sequence occupies residues 1–21 (MKLKLVAVAVTSLLAAGVVNA).

The protein belongs to the Gram-negative porin family. Homotrimer.

The protein resides in the cell outer membrane. Functionally, forms pores that allow passive diffusion of small molecules across the outer membrane. This chain is Outer membrane porin protein OmpD (ompD), found in Salmonella choleraesuis (strain SC-B67).